The chain runs to 119 residues: Putative phosphoethanolamine transferase YjgX (119 aa).

2 consecutive transmembrane segments (helical) span residues 5–25 and 94–114; these read VFPVYHFLVSAAILVFVVIFW and LLLSLVRVCAGIICQCMTIPY.

It belongs to the phosphoethanolamine transferase family.

It is found in the cell inner membrane. In Escherichia coli (strain K12), this protein is Putative phosphoethanolamine transferase YjgX (yjgX).